The chain runs to 177 residues: Large ribosomal subunit protein bL19 (177 aa).

Belongs to the bacterial ribosomal protein bL19 family.

Functionally, this protein is located at the 30S-50S ribosomal subunit interface and may play a role in the structure and function of the aminoacyl-tRNA binding site. In Sinorhizobium medicae (strain WSM419) (Ensifer medicae), this protein is Large ribosomal subunit protein bL19.